An 839-amino-acid chain; its full sequence is Phenylalanine--tRNA ligase beta subunit (839 aa).

Positions 42–166 constitute a tRNA-binding domain; the sequence is GELTGPIVIG…PPSVEGHQLV (125 aa). In terms of domain architecture, B5 spans 421–496; it reads PEMPRQTINA…RKIGFDRIKA (76 aa). Residues D474, D480, E483, and E484 each contribute to the Mg(2+) site. The 94-residue stretch at 745–838 folds into the FDX-ACB domain; sequence SSFPVAKEDV…AEETCGAQLR (94 aa).

It belongs to the phenylalanyl-tRNA synthetase beta subunit family. Type 1 subfamily. Tetramer of two alpha and two beta subunits. Mg(2+) is required as a cofactor.

The protein resides in the cytoplasm. It catalyses the reaction tRNA(Phe) + L-phenylalanine + ATP = L-phenylalanyl-tRNA(Phe) + AMP + diphosphate + H(+). This Cutibacterium acnes (strain DSM 16379 / KPA171202) (Propionibacterium acnes) protein is Phenylalanine--tRNA ligase beta subunit.